The primary structure comprises 251 residues: MELVSIIIAAYNCKDTIYATVESALSQTYKNIEIIICDDSSTDDTWDIINKIKDSRIICIKNNYCKGAAGARNCALKIAKGRYIAFLDSDDYWVTTKISNQIHFMETEKVFFSYSNYYIEKDFVITGVFSSPPEINYGAMLKYCNIACSTVILDRTGVKNISFPYIDKEDYALWLNILSKGIKARNTNLVDTYYRVHAGSVSANKFKELIRQSNVLKSIGIKAHHRIICLFYYAINGLIKHCFSYRDKRNA.

The protein belongs to the glycosyltransferase 2 family. Mn(2+) is required as a cofactor. It depends on Mg(2+) as a cofactor.

Its subcellular location is the cell inner membrane. The catalysed reaction is N-acetyl-alpha-D-glucosaminyl-di-trans,octa-cis-undecaprenyl diphosphate + UDP-alpha-D-glucose = beta-D-Glc-(1-&gt;3)-alpha-D-GlcNAc-di-trans,octa-cis-undecaprenyl diphosphate + UDP + H(+). The protein operates within bacterial outer membrane biogenesis; lipopolysaccharide biosynthesis. Its function is as follows. Catalyzes the addition of Glc, the second sugar moiety of the O56-antigen repeating unit, to GlcNAc-pyrophosphate-undecaprenol. The protein is UDP-Glc:alpha-D-GlcNAc-diphosphoundecaprenol beta-1,3-glucosyltransferase WfaP (wfaP) of Escherichia coli.